The chain runs to 519 residues: Sensor protein RprX (519 aa).

Helical transmembrane passes span threonine 5–valine 25 and isoleucine 260–valine 280. Positions asparagine 296–lysine 517 constitute a Histidine kinase domain. At histidine 299 the chain carries Phosphohistidine; by autocatalysis.

The protein resides in the cell membrane. The enzyme catalyses ATP + protein L-histidine = ADP + protein N-phospho-L-histidine.. In terms of biological role, member of the two-component regulatory system RprX/RprY. May activate RprY by phosphorylation. The protein is Sensor protein RprX (rprX) of Bacteroides fragilis (strain YCH46).